The chain runs to 713 residues: G-protein coupled receptor-associated protein LMBRD2 (713 aa).

Residues 1-3 (MSG) are Extracellular-facing. Residues 4–21 (VALGIEIVSVFFLALFLL) form a helical membrane-spanning segment. Residues 22–32 (HRYGDFKKQHK) are Cytoplasmic-facing. Residues 33 to 53 (LVIVGTLLAWYLCFLIVFIIP) traverse the membrane as a helical segment. At 54–122 (LDVSTTIYNR…SKPWSYIPRG (69 aa)) the chain is on the extracellular side. 2 N-linked (GlcNAc...) asparagine glycosylation sites follow: Asn-76 and Asn-89. The chain crosses the membrane as a helical span at residues 123 to 143 (IMPIFWRVVYWTSQFLTWILM). Topologically, residues 144–167 (PFMQSYARSGGFSITGKIKTALIE) are cytoplasmic. A helical transmembrane segment spans residues 168-188 (NAIYYGTYLLIFGALLIYVAV). At 189–203 (NPNLHLEWYQLQTIG) the chain is on the extracellular side. Residues 204 to 224 (IAAANTWGLFLLVLLMGYGLV) form a helical membrane-spanning segment. At 225-404 (EIPRSQWNGA…ECLLRPWCSR (180 aa)) the chain is on the cytoplasmic side. The stretch at 246 to 314 (KAAKLMTEKA…DDYEDFEEKN (69 aa)) forms a coiled coil. The chain crosses the membrane as a helical span at residues 405-425 (ILAVILALFSTVVVWSECTFF). Topologically, residues 426–449 (SAKPVLSLFAVFIQQAEQTHNYIY) are extracellular. The helical transmembrane segment at 450-470 (VEVVCFLSIFFLSICVYSTVF) threads the bilayer. The Cytoplasmic portion of the chain corresponds to 471–490 (RIRVFNYYYLASHHQTDAYS). The helical transmembrane segment at 491–511 (LLFSGMLFCRLTPPLCLNFLG) threads the bilayer. At 512 to 538 (LTHMDVSISHQNIEPTAYTSIMGSLRV) the chain is on the extracellular side. Residues 539–559 (LPLIADVFYIYYPMLVLILCI) form a helical membrane-spanning segment. The Cytoplasmic portion of the chain corresponds to 560 to 713 (ATYFSLGTRC…QSNSRIFDDV (154 aa)). The stretch at 587–620 (DLTDEGKELIKREKRKRQRLEDGETRRREWKERY) forms a coiled coil. The interval 600-713 (KRKRQRLEDG…QSNSRIFDDV (114 aa)) is disordered. Over residues 605–629 (RLEDGETRRREWKERYPTNREDTSR) the composition is skewed to basic and acidic residues. Residues 643–657 (TEMTTNRSSKYTRAS) show a composition bias toward polar residues. Positions 658-667 (NRTERDRIEL) are enriched in basic and acidic residues. Positions 701 to 713 (SMSQSNSRIFDDV) are enriched in polar residues.

This sequence belongs to the LIMR family.

Its subcellular location is the cell membrane. Its function is as follows. May associate with G-protein coupled receptors and regulate downstream signaling pathways. This is G-protein coupled receptor-associated protein LMBRD2 (lmbrd2) from Xenopus laevis (African clawed frog).